We begin with the raw amino-acid sequence, 25 residues long: Oxyopinin-3c (25 aa).

Expressed by the venom gland.

The protein localises to the secreted. Its function is as follows. May have cytolytic and antimicrobial activity. This chain is Oxyopinin-3c, found in Oxyopes takobius (Lynx spider).